Here is a 397-residue protein sequence, read N- to C-terminus: Phosphoglycerate kinase (397 aa).

Substrate is bound by residues 23-25 (DFN), R38, 61-64 (HMGK), R122, and R155. ATP contacts are provided by residues K206, G296, E327, and 353 to 356 (GGDS).

Belongs to the phosphoglycerate kinase family. In terms of assembly, monomer.

It localises to the cytoplasm. The enzyme catalyses (2R)-3-phosphoglycerate + ATP = (2R)-3-phospho-glyceroyl phosphate + ADP. Its pathway is carbohydrate degradation; glycolysis; pyruvate from D-glyceraldehyde 3-phosphate: step 2/5. This chain is Phosphoglycerate kinase, found in Clostridium perfringens (strain SM101 / Type A).